Consider the following 415-residue polypeptide: Imidazolonepropionase (415 aa).

Residues H75 and H77 each contribute to the Fe(3+) site. Zn(2+) is bound by residues H75 and H77. 4-imidazolone-5-propanoate is bound by residues R84, Y147, and H180. N-formimidoyl-L-glutamate is bound at residue Y147. Residue H245 participates in Fe(3+) binding. Zn(2+) is bound at residue H245. 4-imidazolone-5-propanoate is bound at residue Q248. D320 is a Fe(3+) binding site. Position 320 (D320) interacts with Zn(2+). N-formimidoyl-L-glutamate contacts are provided by N322 and G324. T325 serves as a coordination point for 4-imidazolone-5-propanoate.

This sequence belongs to the metallo-dependent hydrolases superfamily. HutI family. Zn(2+) serves as cofactor. The cofactor is Fe(3+).

Its subcellular location is the cytoplasm. The catalysed reaction is 4-imidazolone-5-propanoate + H2O = N-formimidoyl-L-glutamate. Its pathway is amino-acid degradation; L-histidine degradation into L-glutamate; N-formimidoyl-L-glutamate from L-histidine: step 3/3. Catalyzes the hydrolytic cleavage of the carbon-nitrogen bond in imidazolone-5-propanoate to yield N-formimidoyl-L-glutamate. It is the third step in the universal histidine degradation pathway. The polypeptide is Imidazolonepropionase (Photorhabdus laumondii subsp. laumondii (strain DSM 15139 / CIP 105565 / TT01) (Photorhabdus luminescens subsp. laumondii)).